The following is a 278-amino-acid chain: MAIRKYKPTTPGRRGSSVSDFAEITRSTPEKSLLRPLTKSGGRNAHGRITTRHRGGGHKRAYRVIDFRRLDKDGIPAKVAHIEYDPNRTANIALLHYVDGEKRYILAPKGVTQGTPIESGPTADIKPGNNLPLRNIPTGTTIHNVELRPGGGAKLARAAGMSIQLLGKEGPYATLRMPSGEIRRVDVRCRATVGEVGNAEQSNINWGKAGRMRWKGRRPTVRGVVMNPVDHPHGGGEGKTSGGRHPVSPWGQPEGRTRKPNRPSDKLIVRRRKTGKKR.

Disordered regions lie at residues 1 to 20, 25 to 57, and 224 to 278; these read MAIRKYKPTTPGRRGSSVSD, TRSTPEKSLLRPLTKSGGRNAHGRITTRHRGGG, and VVMN…GKKR. Basic residues-rich tracts occupy residues 45 to 57 and 269 to 278; these read AHGRITTRHRGGG and VRRRKTGKKR.

This sequence belongs to the universal ribosomal protein uL2 family. As to quaternary structure, part of the 50S ribosomal subunit. Forms a bridge to the 30S subunit in the 70S ribosome.

One of the primary rRNA binding proteins. Required for association of the 30S and 50S subunits to form the 70S ribosome, for tRNA binding and peptide bond formation. It has been suggested to have peptidyltransferase activity; this is somewhat controversial. Makes several contacts with the 16S rRNA in the 70S ribosome. This is Large ribosomal subunit protein uL2 from Nocardia farcinica (strain IFM 10152).